The sequence spans 224 residues: LexA repressor (224 aa).

Positions 31–51 (RAEIANTLGFKSANAAEEHLQ) form a DNA-binding region, H-T-H motif. Residues S142 and K179 each act as for autocatalytic cleavage activity in the active site.

Belongs to the peptidase S24 family. Homodimer.

The catalysed reaction is Hydrolysis of Ala-|-Gly bond in repressor LexA.. Its function is as follows. Represses a number of genes involved in the response to DNA damage (SOS response), including recA and lexA. In the presence of single-stranded DNA, RecA interacts with LexA causing an autocatalytic cleavage which disrupts the DNA-binding part of LexA, leading to derepression of the SOS regulon and eventually DNA repair. This is LexA repressor from Delftia acidovorans (strain DSM 14801 / SPH-1).